The following is a 504-amino-acid chain: Activin receptor type-1 (504 aa).

The N-terminal stretch at 1–16 (MALPVLLLLLALPSRS) is a signal peptide. Over 17 to 119 (VQDEELKLNE…EAAGYSMETL (103 aa)) the chain is Extracellular. A glycan (N-linked (GlcNAc...) asparagine) is linked at N94. A helical membrane pass occupies residues 120 to 140 (IIVILAPVVVLVIFSVVAVLI). The Cytoplasmic portion of the chain corresponds to 141–504 (IRRIQKNHME…NSLDKLKADC (364 aa)). One can recognise a GS domain in the interval 173 to 202 (STLADLLDHSCTSGSGSGLPFLVQRTVARQ). Residues 203 to 497 (ITLVECVGKG…KTLTKIDNSL (295 aa)) form the Protein kinase domain. ATP contacts are provided by residues 209–217 (VGKGRYGEV) and K230. D331 functions as the Proton acceptor in the catalytic mechanism.

It belongs to the protein kinase superfamily. TKL Ser/Thr protein kinase family. TGFB receptor subfamily. It depends on Mg(2+) as a cofactor. Mn(2+) is required as a cofactor.

The protein localises to the membrane. The catalysed reaction is L-threonyl-[receptor-protein] + ATP = O-phospho-L-threonyl-[receptor-protein] + ADP + H(+). It carries out the reaction L-seryl-[receptor-protein] + ATP = O-phospho-L-seryl-[receptor-protein] + ADP + H(+). Functionally, on ligand binding, forms a receptor complex consisting of two type II and two type I transmembrane serine/threonine kinases. Type II receptors phosphorylate and activate type I receptors which autophosphorylate, then bind and activate SMAD transcriptional regulators. Receptor for activin. The polypeptide is Activin receptor type-1 (ACVR1) (Gallus gallus (Chicken)).